The sequence spans 307 residues: Coproporphyrin III ferrochelatase (307 aa).

Fe-coproporphyrin III contacts are provided by residues Tyr-12, Arg-29, 45 to 46, Ser-53, and Tyr-124; that span reads RY. Fe(2+) is bound by residues His-181 and Glu-263.

Belongs to the ferrochelatase family.

It is found in the cytoplasm. It carries out the reaction Fe-coproporphyrin III + 2 H(+) = coproporphyrin III + Fe(2+). The protein operates within porphyrin-containing compound metabolism; protoheme biosynthesis. In terms of biological role, involved in coproporphyrin-dependent heme b biosynthesis. Catalyzes the insertion of ferrous iron into coproporphyrin III to form Fe-coproporphyrin III. It can also insert iron into protoporphyrin IX, but it has a much stronger preference for coproprophyrin III as the substrate. The protein is Coproporphyrin III ferrochelatase of Staphylococcus aureus (strain NCTC 8325 / PS 47).